Consider the following 98-residue polypeptide: Bombyxin E-1 (98 aa).

Positions 1 to 19 (MNRPVFLVLLLTGFLCIAA) are cleaved as a signal peptide. Pyrrolidone carboxylic acid is present on Gln20. 3 cysteine pairs are disulfide-bonded: Cys29/Cys85, Cys41/Cys98, and Cys84/Cys89. A propeptide spans 50–75 (SESSLASYSSRGWPWLPTPNFNKRAI) (c peptide like).

This sequence belongs to the insulin family. In terms of assembly, heterodimer of a B chain and an A chain linked by two disulfide bonds.

The protein resides in the secreted. Functionally, PTTH is a brain peptide responsible for activation of prothoracic glands to produce ecdysone in insects. This chain is Bombyxin E-1 (BBXE1), found in Bombyx mori (Silk moth).